We begin with the raw amino-acid sequence, 752 residues long: Zinc finger protein 184 (752 aa).

In terms of domain architecture, KRAB spans 28 to 99 (VTFKDVIVDF…EPSIPVGTPG (72 aa)). Phosphoserine occurs at positions 117, 122, and 200. K207 participates in a covalent cross-link: Glycyl lysine isopeptide (Lys-Gly) (interchain with G-Cter in SUMO2). C2H2-type zinc fingers lie at residues 223–245 (CKCN…QRTH), 251–273 (YKCN…QRIH), 279–301 (YKCD…QRIH), 307–329 (YKCD…QRIH), 335–357 (YTCN…QKIH), 363–385 (FKCD…QKIH), 391–413 (YKCN…HMIH), 419–441 (YECN…QKTH), 447–469 (YDCA…LKIH), 475–497 (YKCN…RRIH), 503–525 (FECS…QKTH), 531–553 (YECK…ERIH), 559–581 (YQCH…RKIH), 587–609 (YKCN…KRIH), 615–637 (YECA…QKTH), 643–665 (YHCN…QRIH), 671–693 (YKCN…QNTH), 699–721 (YNCN…QRIH), and 727–749 (FGCN…QRLH).

It belongs to the krueppel C2H2-type zinc-finger protein family.

The protein resides in the nucleus. In terms of biological role, may be involved in transcriptional regulation. The protein is Zinc finger protein 184 (ZNF184) of Bos taurus (Bovine).